The sequence spans 760 residues: Anti-sigma-I factor RsgI6 (760 aa).

Residues 1–55 (MIVGKVLDMDEKTAIIMTDDFAFLNVVRTSEMAVGKKVKVLDSDIIKPKNSLRRY) are Cytoplasmic-facing. Residues 2–49 (IVGKVLDMDEKTAIIMTDDFAFLNVVRTSEMAVGKKVKVLDSDIIKPK) enclose the RsgI N-terminal anti-sigma domain. A helical membrane pass occupies residues 56–76 (LPVAAVAACFVIVLSFVLMFI). Topologically, residues 77–760 (NGNTARKNIY…GTLQTTYRIP (684 aa)) are extracellular. The segment at 274-352 (AINTGPAESA…STPKPVSPVQ (79 aa)) is disordered. The segment covering 291 to 352 (LPATSTPGRT…STPKPVSPVQ (62 aa)) has biased composition (polar residues). The 300-residue stretch at 402–701 (DSSNKPIENA…NEAGRRFESL (300 aa)) folds into the GH10 domain. Glu538 serves as the catalytic Proton donor. Glu635 acts as the Nucleophile in catalysis.

It in the C-terminal section; belongs to the glycosyl hydrolase 10 (cellulase F) family. In terms of assembly, interacts (via RsgI N-terminal anti-sigma domain) with SigI6.

It localises to the cell membrane. It catalyses the reaction Endohydrolysis of (1-&gt;4)-beta-D-xylosidic linkages in xylans.. The protein operates within glycan degradation; xylan degradation. Functionally, anti-sigma factor for SigI6. Negatively regulates SigI6 activity through direct interaction. Binding of the polysaccharide substrate to the extracellular C-terminal sensing domain of RsgI6 may induce a conformational change in its N-terminal cytoplasmic region, leading to the release and activation of SigI6. Binds to and hydrolyzes insoluble and soluble xylan substrates. Has low enzymatic activity. The protein is Anti-sigma-I factor RsgI6 of Acetivibrio thermocellus (strain ATCC 27405 / DSM 1237 / JCM 9322 / NBRC 103400 / NCIMB 10682 / NRRL B-4536 / VPI 7372) (Clostridium thermocellum).